A 198-amino-acid chain; its full sequence is Holliday junction branch migration complex subunit RuvA (198 aa).

Residues 1–63 (MIAYLSGAVR…EDAQLLFGFL (63 aa)) form a domain I region. Positions 64 to 142 (DTDSLRLFDL…EHLAAGAPVS (79 aa)) are domain II. The segment at 143–150 (AGKAALTS) is flexible linker. The domain III stretch occupies residues 150-198 (STAGRDAIEALLALGFREPQVRSVVAELLAADPEQSADALIRKGLGKLR).

Belongs to the RuvA family. Homotetramer. Forms an RuvA(8)-RuvB(12)-Holliday junction (HJ) complex. HJ DNA is sandwiched between 2 RuvA tetramers; dsDNA enters through RuvA and exits via RuvB. An RuvB hexamer assembles on each DNA strand where it exits the tetramer. Each RuvB hexamer is contacted by two RuvA subunits (via domain III) on 2 adjacent RuvB subunits; this complex drives branch migration. In the full resolvosome a probable DNA-RuvA(4)-RuvB(12)-RuvC(2) complex forms which resolves the HJ.

It is found in the cytoplasm. Functionally, the RuvA-RuvB-RuvC complex processes Holliday junction (HJ) DNA during genetic recombination and DNA repair, while the RuvA-RuvB complex plays an important role in the rescue of blocked DNA replication forks via replication fork reversal (RFR). RuvA specifically binds to HJ cruciform DNA, conferring on it an open structure. The RuvB hexamer acts as an ATP-dependent pump, pulling dsDNA into and through the RuvAB complex. HJ branch migration allows RuvC to scan DNA until it finds its consensus sequence, where it cleaves and resolves the cruciform DNA. The polypeptide is Holliday junction branch migration complex subunit RuvA (Deinococcus geothermalis (strain DSM 11300 / CIP 105573 / AG-3a)).